A 231-amino-acid chain; its full sequence is eRF1 methyltransferase catalytic subunit mtq2 (231 aa).

S-adenosyl-L-methionine is bound by residues 54 to 58, Asp80, and Asn130; that span reads GCGSG. 130–133 provides a ligand contact to substrate; that stretch reads NPPY.

It belongs to the eukaryotic/archaeal PrmC-related family. In terms of assembly, heterodimer of mtq2-trm112. mtq2 is the catalytic subunit carrying the catalytic and the S-adenosyl L-methionine binding sites.

The protein resides in the cytoplasm. The protein localises to the nucleus. The enzyme catalyses L-glutaminyl-[peptide chain release factor] + S-adenosyl-L-methionine = N(5)-methyl-L-glutaminyl-[peptide chain release factor] + S-adenosyl-L-homocysteine + H(+). Its function is as follows. Methylates eRF1 on 'Gln-182' using S-adenosyl L-methionine as methyl donor. eRF1 needs to be complexed to eRF3 in its GTP-bound form to be efficiently methylated. The polypeptide is eRF1 methyltransferase catalytic subunit mtq2 (mtq2) (Schizosaccharomyces pombe (strain 972 / ATCC 24843) (Fission yeast)).